Reading from the N-terminus, the 185-residue chain is Ribosome-recycling factor (185 aa).

This sequence belongs to the RRF family.

The protein resides in the cytoplasm. Functionally, responsible for the release of ribosomes from messenger RNA at the termination of protein biosynthesis. May increase the efficiency of translation by recycling ribosomes from one round of translation to another. In Streptococcus equi subsp. equi (strain 4047), this protein is Ribosome-recycling factor.